We begin with the raw amino-acid sequence, 435 residues long: Serine--tRNA ligase (435 aa).

242-244 contacts L-serine; it reads TAE. 273–275 is a binding site for ATP; the sequence is RSE. Glu-296 serves as a coordination point for L-serine. ATP is bound at residue 360–363; it reads EISS. L-serine is bound at residue Ser-396.

This sequence belongs to the class-II aminoacyl-tRNA synthetase family. Type-1 seryl-tRNA synthetase subfamily. Homodimer. The tRNA molecule binds across the dimer.

Its subcellular location is the cytoplasm. The enzyme catalyses tRNA(Ser) + L-serine + ATP = L-seryl-tRNA(Ser) + AMP + diphosphate + H(+). The catalysed reaction is tRNA(Sec) + L-serine + ATP = L-seryl-tRNA(Sec) + AMP + diphosphate + H(+). Its pathway is aminoacyl-tRNA biosynthesis; selenocysteinyl-tRNA(Sec) biosynthesis; L-seryl-tRNA(Sec) from L-serine and tRNA(Sec): step 1/1. Functionally, catalyzes the attachment of serine to tRNA(Ser). Is also able to aminoacylate tRNA(Sec) with serine, to form the misacylated tRNA L-seryl-tRNA(Sec), which will be further converted into selenocysteinyl-tRNA(Sec). The chain is Serine--tRNA ligase from Aliivibrio salmonicida (strain LFI1238) (Vibrio salmonicida (strain LFI1238)).